A 417-amino-acid polypeptide reads, in one-letter code: BSD domain-containing protein 1-B (417 aa).

The BSD domain occupies 153 to 205 (WLAYWDPEQRKAEISEPLVTSPSIRALFTKMVPAAVSHSEFWQRYFYKVHQLE). Disordered regions lie at residues 215–234 (KQRA…EEEE), 262–292 (HVED…SISP), and 323–390 (AAET…DFDM). Positions 262–278 (HVEDKSEKTAELNRDHT) are enriched in basic and acidic residues. The span at 281–292 (TSPSESSESISP) shows a compositional bias: low complexity. A compositionally biased stretch (polar residues) spans 332-343 (PVEQTGKSNAQM). Residues 345-356 (THREDPPSDLRV) show a composition bias toward basic and acidic residues. The span at 360–379 (NSDSGKSTPSNNGQKGSSTD) shows a compositional bias: polar residues. Residues 380 to 390 (VSEDWEKDFDM) show a composition bias toward acidic residues.

This Xenopus laevis (African clawed frog) protein is BSD domain-containing protein 1-B (bsdc1-b).